A 557-amino-acid chain; its full sequence is ETHYLENE INSENSITIVE 3-like 5 protein (557 aa).

Disordered stretches follow at residues methionine 1–glutamate 23 and asparagine 61–methionine 96. Over residues serine 64–serine 82 the composition is skewed to low complexity. The stretch at glutamate 270 to serine 311 forms a coiled coil.

The protein belongs to the EIN3 family.

The protein resides in the nucleus. Its function is as follows. Putative transcription factor that may be involved in the ethylene response pathway. The sequence is that of ETHYLENE INSENSITIVE 3-like 5 protein (EIL5) from Arabidopsis thaliana (Mouse-ear cress).